Reading from the N-terminus, the 87-residue chain is Small ribosomal subunit protein bS20 (87 aa).

The segment at 1–22 (MANIKSQIKRIGTNKKAQERNK) is disordered.

Belongs to the bacterial ribosomal protein bS20 family.

In terms of biological role, binds directly to 16S ribosomal RNA. The sequence is that of Small ribosomal subunit protein bS20 from Clavibacter sepedonicus (Clavibacter michiganensis subsp. sepedonicus).